Consider the following 181-residue polypeptide: Probable integrase/recombinase YoeC (181 aa).

In terms of domain architecture, Tyr recombinase spans 3–176 (IVQPIRSLEK…DEDTTRAAYK (174 aa)). Catalysis depends on residues Arg-40, Lys-64, His-128, Arg-131, and His-154. Tyr-163 acts as the O-(3'-phospho-DNA)-tyrosine intermediate in catalysis.

The protein belongs to the 'phage' integrase family.

In Bacillus subtilis (strain 168), this protein is Probable integrase/recombinase YoeC (yoeC).